Here is an 867-residue protein sequence, read N- to C-terminus: E3 ubiquitin-protein ligase SH3RF1 (867 aa).

The RING-type zinc finger occupies 12–53; that stretch reads CPVCLERLDATAKVLPCQHTFCRRCLLGIVGSRGELRCPECR. Residues 101 to 127 are disordered; it reads AQGAGGSQRDPGPTGGQSQRVQAKSTP. Residues 116–125 show a composition bias toward polar residues; sequence GQSQRVQAKS. SH3 domains are found at residues 132–191 and 194–257; these read PQLP…VIKP and QPPP…FNSA. Positions 265–328 are disordered; the sequence is DKPSEGGGDS…PPPQRHSMEI (64 aa). Residues 275 to 285 are compositionally biased toward low complexity; that stretch reads SEGPSSSSSGP. Positions 436–497 constitute an SH3 3 domain; the sequence is QRPTVYVAMF…PGNYMSPVSR (62 aa). Residues 706–794 are disordered; it reads LSNKKKLRPS…APIAPPPRQP (89 aa). Residues 760 to 769 show a composition bias toward low complexity; that stretch reads SELSMSSSSS. The span at 770-784 shows a compositional bias: polar residues; the sequence is NTDAVTHRSSPQDNT. The SH3 4 domain maps to 808 to 867; the sequence is IVCERYRVVVSYPPQSEAELELKEGDIVFVHKKREDGWFKGTLQRNGRTGLFPGSFVDSI.

This sequence belongs to the SH3RF family. Post-translationally, autoubiquitinated. Ubiquitinated by SH3RF2, leading to proteasome-mediated degradation.

The protein resides in the cytoplasm. It localises to the perinuclear region. It is found in the cell projection. Its subcellular location is the lamellipodium. The protein localises to the golgi apparatus. The protein resides in the trans-Golgi network. The catalysed reaction is S-ubiquitinyl-[E2 ubiquitin-conjugating enzyme]-L-cysteine + [acceptor protein]-L-lysine = [E2 ubiquitin-conjugating enzyme]-L-cysteine + N(6)-ubiquitinyl-[acceptor protein]-L-lysine.. The protein operates within protein modification; protein ubiquitination. In terms of biological role, has E3 ubiquitin-protein ligase activity. In the absence of an external substrate, it can catalyze self-ubiquitination. Acts as a scaffold protein that contributes to the effective activation of the JNK signaling pathway. In Danio rerio (Zebrafish), this protein is E3 ubiquitin-protein ligase SH3RF1 (sh3rf1).